Consider the following 204-residue polypeptide: Protein phosphatase 1 regulatory subunit 1B (204 aa).

Position 1 is an N-acetylmethionine (Met1). The tract at residues 1–204 (MDPKDRKKIQ…QRPSPSEPGT (204 aa)) is disordered. Residue Thr34 is modified to Phosphothreonine; by PKA. Positions 41–63 (LSEHSSPEEEASPHQRASGEGHH) are enriched in basic and acidic residues. Phosphoserine is present on residues Ser45 and Ser46. Phosphothreonine; by CDK5 is present on Thr75. Residues 89 to 100 (HLQSISNLNENQ) show a composition bias toward polar residues. The residue at position 102 (Ser102) is a Phosphoserine. Over residues 109–118 (GELRELGYPR) the composition is skewed to basic and acidic residues. 2 stretches are compositionally biased toward acidic residues: residues 119-138 (EEDE…EDSQ) and 170-183 (DESE…DQVE). A Phosphoserine modification is found at Ser137. At Ser198 the chain carries Phosphoserine.

Belongs to the protein phosphatase inhibitor 1 family. Dopamine- and cyclic AMP-regulated neuronal phosphoprotein. Post-translationally, phosphorylation of Thr-34 is required for activity.

The protein resides in the cytoplasm. In terms of biological role, inhibitor of protein-phosphatase 1. The chain is Protein phosphatase 1 regulatory subunit 1B (PPP1R1B) from Homo sapiens (Human).